A 495-amino-acid polypeptide reads, in one-letter code: Steroid 21-hydroxylase (495 aa).

Residues Arg-92 and Lys-121 each coordinate heme b. Position 234 (Arg-234) interacts with 17alpha-hydroxyprogesterone. Residue Arg-234 participates in progesterone binding. Residues His-366, Arg-427, and Cys-429 each coordinate heme b.

The protein belongs to the cytochrome P450 family. Heme b serves as cofactor.

Its subcellular location is the endoplasmic reticulum membrane. It localises to the microsome membrane. It carries out the reaction progesterone + reduced [NADPH--hemoprotein reductase] + O2 = 21-hydroxyprogesterone + oxidized [NADPH--hemoprotein reductase] + H2O + H(+). The enzyme catalyses 17alpha-hydroxyprogesterone + reduced [NADPH--hemoprotein reductase] + O2 = 11-deoxycortisol + oxidized [NADPH--hemoprotein reductase] + H2O + H(+). Functionally, a cytochrome P450 monooxygenase that plays a major role in adrenal steroidogenesis. Catalyzes the hydroxylation at C-21 of progesterone and 17alpha-hydroxyprogesterone to respectively form 11-deoxycorticosterone and 11-deoxycortisol, intermediate metabolites in the biosynthetic pathway of mineralocorticoids and glucocorticoids. Mechanistically, uses molecular oxygen inserting one oxygen atom into a substrate, and reducing the second into a water molecule, with two electrons provided by NADPH via cytochrome P450 reductase (CPR; NADPH-ferrihemoprotein reductase). The protein is Steroid 21-hydroxylase (CYP21A2) of Homo sapiens (Human).